The primary structure comprises 295 residues: Small ribosomal subunit protein uS2 (295 aa).

The tract at residues 242–295 (APVEPTLARELAPEAPAPEAPAEEAPAAEAAPAAEAAPAAEAAPAEASSEEQAG) is disordered. Positions 264 to 288 (EEAPAAEAAPAAEAAPAAEAAPAEA) are enriched in low complexity.

Belongs to the universal ribosomal protein uS2 family.

The protein is Small ribosomal subunit protein uS2 of Phenylobacterium zucineum (strain HLK1).